The chain runs to 252 residues: MSLMPFDDFYYPYQLRRRSPRWMDSTGSPWDSFATSRDWMTTPYSSTGIGRRDLSQDWMTTPYTPAGVGRRDLSQDWMTTPYTSKGIGSRNLSSWGSKSETIREMEKKFDELVRKVDRRFTGMLSMLDDPEPFARQNISVEHEGKTTSKTTKLQDFNMKVDVQDFKPEEVKVKVQGGQVLVHAKRENRDEGDGMFAYSCSEFKRAFILPEGVSAERLTSSLSRDGILQIDAPVAVAIDNKKTAVPVTVEHTK.

Ser-2 carries the post-translational modification N-acetylserine. 3 repeat units span residues 37–55 (RDWM…RDLS), 56–74 (QDWM…RDLS), and 75–93 (QDWM…RNLS). Residues 37–93 (RDWMTTPYSSTGIGRRDLSQDWMTTPYTPAGVGRRDLSQDWMTTPYTSKGIGSRNLS) are 3 X 19 AA approximate tandem repeats. The sHSP domain occupies 138–249 (ISVEHEGKTT…KKTAVPVTVE (112 aa)).

It belongs to the small heat shock protein (HSP20) family. In terms of assembly, exists as an oligomer.

The protein resides in the membrane. Its function is as follows. May be a component of myofibrils where it acts as a stabilizer. The sequence is that of Body wall muscle protein HR-29 from Halocynthia roretzi (Sea squirt).